The sequence spans 157 residues: Large ribosomal subunit protein uL11 (157 aa).

Disordered stretches follow at residues 1–28 (MAGTIEVLIPGGEANPGPPLGPELGPTP) and 138–157 (NNPREFKSRMEDGEYDDILK). The span at 139–157 (NPREFKSRMEDGEYDDILK) shows a compositional bias: basic and acidic residues.

Belongs to the universal ribosomal protein uL11 family. As to quaternary structure, part of the ribosomal stalk of the 50S ribosomal subunit. Interacts with L10 and the large rRNA to form the base of the stalk. L10 forms an elongated spine to which L12 dimers bind in a sequential fashion forming a multimeric L10(L12)X complex.

In terms of biological role, forms part of the ribosomal stalk which helps the ribosome interact with GTP-bound translation factors. This chain is Large ribosomal subunit protein uL11, found in Haloquadratum walsbyi (strain DSM 16790 / HBSQ001).